The primary structure comprises 426 residues: Serine--tRNA ligase (426 aa).

Position 233-235 (233-235) interacts with L-serine; the sequence is TAE. 264-266 lines the ATP pocket; that stretch reads RSE. Position 287 (Glu-287) interacts with L-serine. Residue 351–354 coordinates ATP; that stretch reads EISS. Position 387 (Ser-387) interacts with L-serine.

Belongs to the class-II aminoacyl-tRNA synthetase family. Type-1 seryl-tRNA synthetase subfamily. As to quaternary structure, homodimer. The tRNA molecule binds across the dimer.

The protein localises to the cytoplasm. It catalyses the reaction tRNA(Ser) + L-serine + ATP = L-seryl-tRNA(Ser) + AMP + diphosphate + H(+). The catalysed reaction is tRNA(Sec) + L-serine + ATP = L-seryl-tRNA(Sec) + AMP + diphosphate + H(+). The protein operates within aminoacyl-tRNA biosynthesis; selenocysteinyl-tRNA(Sec) biosynthesis; L-seryl-tRNA(Sec) from L-serine and tRNA(Sec): step 1/1. In terms of biological role, catalyzes the attachment of serine to tRNA(Ser). Is also able to aminoacylate tRNA(Sec) with serine, to form the misacylated tRNA L-seryl-tRNA(Sec), which will be further converted into selenocysteinyl-tRNA(Sec). In Pseudomonas fluorescens (strain Pf0-1), this protein is Serine--tRNA ligase.